The following is a 4690-amino-acid chain: Nonribosomal peptide synthetase sidN (4690 aa).

The tract at residues 238-656 (ARVRENPGRI…LGRLSSDQIK (419 aa)) is adenylation 1. In terms of domain architecture, Carrier 1 spans 779 to 856 (SSSIPMLQSV…DLDTKAQQAL (78 aa)). S816 is modified (O-(pantetheine 4'-phosphoryl)serine). The tract at residues 925-1175 (PGGKAFIQHT…AFGNTMSGRF (251 aa)) is condensation 1. Positions 1349 to 1760 (EFAQKSPNAI…GRKDDLVKIR (412 aa)) are adenylation 2. A Carrier 2 domain is found at 1889-1965 (PAWCIKHRPL…DLINHLSVKR (77 aa)). S1926 is subject to O-(pantetheine 4'-phosphoryl)serine. The condensation 2 stretch occupies residues 2001–2285 (PTTVFQDGML…SERLLESQLV (285 aa)). Residues 2464-2869 (TWAKTHPEWK…GRKDEQVKVR (406 aa)) form an adenylation 3 region. The region spanning 3002–3079 (RDLTSIEKQI…ELGRMKNALK (78 aa)) is the Carrier 3 domain. The residue at position 3040 (S3040) is an O-(pantetheine 4'-phosphoryl)serine. The segment at 3121-3530 (CMPLQEVLVA…QMESLVTSFT (410 aa)) is condensation 3. A Carrier 4 domain is found at 3564 to 3637 (SVLEQQIRDV…KLATHIQTTS (74 aa)). O-(pantetheine 4'-phosphoryl)serine is present on S3598. A condensation 4 region spans residues 3679–4087 (VYPLTPLQAG…FESIRKHPDE (409 aa)). One can recognise a Carrier 5 domain in the interval 4119 to 4195 (SAIDQFLDPL…KLCEVAFAKS (77 aa)). S4156 is modified (O-(pantetheine 4'-phosphoryl)serine). Residues 4262–4589 (WVFKAENGLD…FNAHLNILWN (328 aa)) form a condensation 5 region.

This sequence belongs to the NRP synthetase family.

It functions in the pathway siderophore biosynthesis. Nonribosomal peptide synthetase required for the biosynthetis of epichloenin A, an extracellular siderophore that plays a crucial role in endophyte-grass symbioses. SidN assembles epichloenin A by activating and incorporating three trans-anhydromevalonylhydroxyornithine (trans-AMHO), 1 glutamine and 4 glycine moieties. Trans-AMHO is produced from L-ornithine via 2 steps involving a L-ornithine N(5)-monooxygenase and an AHMO-N(5)-transacylase that have still to be identified. The third adenylation domain (A3) of sidN incorporates the hydroxamate groups of the siderophore which forms an octahedral iron complex. The other component amino acids are assembled by sidN adenylation domains A1 and A2. The sequence is that of Nonribosomal peptide synthetase sidN from Epichloe festucae (strain E2368).